The following is a 268-amino-acid chain: Syntaxin-22 (268 aa).

A disordered region spans residues 1–23; that stretch reads MSFQDLESGRGRSTRKFNGGRQD. Position 2 is an N-acetylserine (Ser-2). At 2–246 the chain is on the cytoplasmic side; the sequence is SFQDLESGRG…AAKTQKSNSS (245 aa). The region spanning 175–237 is the t-SNARE coiled-coil homology domain; it reads EAVIEEREQG…SQGKSQLVQA (63 aa). The chain crosses the membrane as a helical; Anchor for type IV membrane protein span at residues 247 to 267; that stretch reads LTCLLLVIFGIVLLIVIIVLA. A topological domain (vesicular) is located at residue Ala-268.

This sequence belongs to the syntaxin family. Interacts with VTI11 and SYP51 to form a t-SNARE complex, but not with VPS45. Expressed in roots, leaves, stems, flower and green siliques.

It is found in the prevacuolar compartment membrane. The protein resides in the vacuole membrane. Its function is as follows. May provide the t-SNARE function in the vacuolar assembly. Promotes the formation of vacuolar membrane 'bulbs'. Required for inflorescence stem gravitropism. The protein is Syntaxin-22 (SYP22) of Arabidopsis thaliana (Mouse-ear cress).